The chain runs to 200 residues: Large ribosomal subunit protein uL4 (200 aa).

The interval 44 to 70 is disordered; the sequence is AQKTRAEVTGSGKKPWRQKGTGRARSG.

This sequence belongs to the universal ribosomal protein uL4 family. Part of the 50S ribosomal subunit.

Functionally, one of the primary rRNA binding proteins, this protein initially binds near the 5'-end of the 23S rRNA. It is important during the early stages of 50S assembly. It makes multiple contacts with different domains of the 23S rRNA in the assembled 50S subunit and ribosome. Protein L4 is a both a transcriptional repressor and a translational repressor protein. It regulates transcription of the S10 operon (to which L4 belongs) by causing premature termination of transcription within the S10 leader. L4 controls the translation of the S10 operon by binding to its mRNA. Its function is as follows. This protein when expressed in E.coli represses both transcription and translation of the endogenous S10 operon. As the M.morganii S10 leader can be regulated in vitro by the E.coli L4 protein this strongly suggests the endogenous protein controls its own S10 operon in a similar fashion. In terms of biological role, forms part of the polypeptide exit tunnel. This chain is Large ribosomal subunit protein uL4 (rplD), found in Morganella morganii (Proteus morganii).